A 400-amino-acid chain; its full sequence is Elongation factor Tu 1 (400 aa).

A tr-type G domain is found at 10–209 (KPHVNIGTIG…AVDEYIPTPQ (200 aa)). Positions 19–26 (GHVDHGKT) are G1. 19–26 (GHVDHGKT) serves as a coordination point for GTP. A Mg(2+)-binding site is contributed by Thr-26. Residues 60-64 (GITIN) form a G2 region. The segment at 81-84 (DCPG) is G3. GTP is bound by residues 81 to 85 (DCPGH) and 136 to 139 (NKAD). The G4 stretch occupies residues 136–139 (NKAD). Residues 174–176 (SAL) form a G5 region.

It belongs to the TRAFAC class translation factor GTPase superfamily. Classic translation factor GTPase family. EF-Tu/EF-1A subfamily. As to quaternary structure, monomer.

Its subcellular location is the cytoplasm. It carries out the reaction GTP + H2O = GDP + phosphate + H(+). Functionally, GTP hydrolase that promotes the GTP-dependent binding of aminoacyl-tRNA to the A-site of ribosomes during protein biosynthesis. The sequence is that of Elongation factor Tu 1 from Pelotomaculum thermopropionicum (strain DSM 13744 / JCM 10971 / SI).